We begin with the raw amino-acid sequence, 621 residues long: CEP295 N-terminal-like protein (621 aa).

The interval 142–253 (GGRARENEPD…RSKGADLERS (112 aa)) is disordered. Positions 159-170 (RSARPPRAKEKH) are enriched in basic residues. The span at 171 to 185 (RAALSEERSCREELG) shows a compositional bias: basic and acidic residues. Residues 203 to 213 (KPQTTKATGRM) show a composition bias toward polar residues. A compositionally biased stretch (basic and acidic residues) spans 219 to 229 (PPEKRKGRPEP). A coiled-coil region spans residues 328-359 (QCTLREKNKWQKELELAFEELFNINRKLKKHL). Disordered regions lie at residues 385–421 (CGAG…ASKT), 491–529 (DQAD…PDMS), and 543–586 (REQR…DRHS). The stretch at 498–525 (STASRQRQKAEMEQRRQKQLESLEQMEH) forms a coiled coil. The segment covering 505–529 (QKAEMEQRRQKQLESLEQMEHPDMS) has biased composition (basic and acidic residues). The segment covering 568–578 (ELSTTSPSGTS) has biased composition (polar residues).

Its subcellular location is the cell projection. The protein resides in the cilium. This is CEP295 N-terminal-like protein from Homo sapiens (Human).